The primary structure comprises 486 residues: Arginine/agmatine antiporter (486 aa).

Helical transmembrane passes span 12-32 (LGAI…GIFS), 41-61 (AGVG…FFIA), 85-105 (GFGP…QIFG), 132-152 (PAIL…LKGI), 160-180 (IIGT…TAFL), 211-231 (STML…VMSA), 242-262 (ATIL…ILPF), 296-316 (VGLL…VAEI), 341-361 (VSLY…YFST), 367-387 (MLSI…AFLV), 418-438 (IWLI…LLAL), and 461-481 (EVTE…LFST).

The protein belongs to the amino acid-polyamine-organocation (APC) superfamily. Basic amino acid/polyamine antiporter (APA) (TC 2.A.3.2) family.

The protein localises to the cell inner membrane. Catalyzes the exchange of L-arginine for agmatine. The arginine uptake by the bacterium in the macrophage may be a virulence factor against the host innate immune response. This chain is Arginine/agmatine antiporter (aaxC), found in Chlamydia abortus (strain DSM 27085 / S26/3) (Chlamydophila abortus).